The chain runs to 88 residues: Small ribosomal subunit protein bS16 (88 aa).

The protein belongs to the bacterial ribosomal protein bS16 family.

In Buchnera aphidicola subsp. Cinara cedri (strain Cc), this protein is Small ribosomal subunit protein bS16.